A 189-amino-acid polypeptide reads, in one-letter code: DnaJ homolog subfamily C member 5G (189 aa).

Residues 17 to 98 (SLYAVLDLKK…KKRKIYDQHG (82 aa)) form the J domain. Residues 154 to 189 (PEQDSGRKYQQNVQSQPPRSGAKCDFRSEENSEDDF) form a disordered region. Residues 161 to 171 (KYQQNVQSQPP) are compositionally biased toward polar residues.

Post-translationally, palmitoylated. As to expression, testis specific.

The protein localises to the membrane. This Homo sapiens (Human) protein is DnaJ homolog subfamily C member 5G (DNAJC5G).